Reading from the N-terminus, the 337-residue chain is Protein ABHD13 (337 aa).

A helical; Signal-anchor for type II membrane protein transmembrane segment spans residues 37–57 (FHLYGGIVLLLLIFVSIAGIL). Catalysis depends on charge relay system residues Ser-193, Asp-268, and His-298. N-linked (GlcNAc...) asparagine glycosylation occurs at Asn-299.

The protein belongs to the serine esterase family.

Its subcellular location is the membrane. The chain is Protein ABHD13 from Mus musculus (Mouse).